A 258-amino-acid polypeptide reads, in one-letter code: Type III pantothenate kinase (258 aa).

Position 6–13 (6–13) interacts with ATP; that stretch reads DVGNTNTV. Residues Tyr100 and 107–110 contribute to the substrate site; that span reads GADR. Residue Asp109 is the Proton acceptor of the active site. Asp129 provides a ligand contact to K(+). Thr132 is a binding site for ATP. Residue Thr184 coordinates substrate.

The protein belongs to the type III pantothenate kinase family. As to quaternary structure, homodimer. Requires NH4(+) as cofactor. K(+) is required as a cofactor.

The protein resides in the cytoplasm. It catalyses the reaction (R)-pantothenate + ATP = (R)-4'-phosphopantothenate + ADP + H(+). It participates in cofactor biosynthesis; coenzyme A biosynthesis; CoA from (R)-pantothenate: step 1/5. Catalyzes the phosphorylation of pantothenate (Pan), the first step in CoA biosynthesis. This Bacillus licheniformis (strain ATCC 14580 / DSM 13 / JCM 2505 / CCUG 7422 / NBRC 12200 / NCIMB 9375 / NCTC 10341 / NRRL NRS-1264 / Gibson 46) protein is Type III pantothenate kinase.